We begin with the raw amino-acid sequence, 221 residues long: uncharacterized protein (221 aa).

The signal sequence occupies residues 1 to 26; that stretch reads MVRLVPRAFAATVALLAAGFSPATAS.

This is an uncharacterized protein from Mycobacterium tuberculosis (strain ATCC 25618 / H37Rv).